A 254-amino-acid chain; its full sequence is 3-deoxy-manno-octulosonate cytidylyltransferase (254 aa).

It belongs to the KdsB family.

Its subcellular location is the cytoplasm. The enzyme catalyses 3-deoxy-alpha-D-manno-oct-2-ulosonate + CTP = CMP-3-deoxy-beta-D-manno-octulosonate + diphosphate. It participates in nucleotide-sugar biosynthesis; CMP-3-deoxy-D-manno-octulosonate biosynthesis; CMP-3-deoxy-D-manno-octulosonate from 3-deoxy-D-manno-octulosonate and CTP: step 1/1. Its pathway is bacterial outer membrane biogenesis; lipopolysaccharide biosynthesis. Functionally, activates KDO (a required 8-carbon sugar) for incorporation into bacterial lipopolysaccharide in Gram-negative bacteria. The polypeptide is 3-deoxy-manno-octulosonate cytidylyltransferase (Haemophilus influenzae (strain PittGG)).